We begin with the raw amino-acid sequence, 634 residues long: Chaperone protein dnaK2 (634 aa).

A Phosphothreonine; by autocatalysis modification is found at threonine 197. The span at 601–620 (SAEASANAQAGPSSSSSSSS) shows a compositional bias: low complexity. The tract at residues 601 to 634 (SAEASANAQAGPSSSSSSSSGDDDVIDAEFSESK) is disordered. A compositionally biased stretch (acidic residues) spans 621-634 (GDDDVIDAEFSESK).

This sequence belongs to the heat shock protein 70 family.

Functionally, acts as a chaperone. The protein is Chaperone protein dnaK2 (dnaK2) of Synechococcus elongatus (strain ATCC 33912 / PCC 7942 / FACHB-805) (Anacystis nidulans R2).